A 329-amino-acid chain; its full sequence is MQGSVTEFLKPRLVDIEQVSSTHAKVTLEPLERGFGHTLGNALRRILLSSMPGCAVTEVEIDGVLHEYSTKEGVQEDILEILLNLKGLAVRVQGKDEVILTLNKSGIGPVTAADITHDGDVEIVKPQHVICHLTDENASISMRIKVRRGRGYVPASTRIHSEEDERPIGRLLVDACYSPVERIAYNVEAARVEQRTDLDKLVIEMETNGTIDPEEAIRRAATILAEQLEAFVDLRDVRQPEVKEEKPEFDPILLRPVDDLELTVRSANCLKAEAIHYIGDLVQRTEVELLKTPNLGKKSLTEIKDVLASRGLSLGMRLENWPPASIADE.

Residues 1-235 are alpha N-terminal domain (alpha-NTD); that stretch reads MQGSVTEFLK…EQLEAFVDLR (235 aa). Residues 249–329 are alpha C-terminal domain (alpha-CTD); the sequence is FDPILLRPVD…NWPPASIADE (81 aa).

Belongs to the RNA polymerase alpha chain family. In terms of assembly, homodimer. The RNAP catalytic core consists of 2 alpha, 1 beta, 1 beta' and 1 omega subunit. When a sigma factor is associated with the core the holoenzyme is formed, which can initiate transcription.

It catalyses the reaction RNA(n) + a ribonucleoside 5'-triphosphate = RNA(n+1) + diphosphate. Functionally, DNA-dependent RNA polymerase catalyzes the transcription of DNA into RNA using the four ribonucleoside triphosphates as substrates. This Shigella dysenteriae serotype 1 (strain Sd197) protein is DNA-directed RNA polymerase subunit alpha.